The primary structure comprises 84 residues: MSYYGSYYRGLGYGCGGFGGLGYGYGCGCGSFRRLGYGCGFGGNGYGYCRPSCYGGYGFSILLKSYPEDTISEVIRRSFNLTKY.

It belongs to the KRTAP type 19 family. As to quaternary structure, interacts with hair keratins.

Functionally, in the hair cortex, hair keratin intermediate filaments are embedded in an interfilamentous matrix, consisting of hair keratin-associated proteins (KRTAP), which are essential for the formation of a rigid and resistant hair shaft through their extensive disulfide bond cross-linking with abundant cysteine residues of hair keratins. The matrix proteins include the high-sulfur and high-glycine-tyrosine keratins. The sequence is that of Keratin-associated protein 19-4 (KRTAP19-4) from Homo sapiens (Human).